A 266-amino-acid chain; its full sequence is DNA primase (266 aa).

The interval 244–266 (VTTTTTPSPPKIGSMQTTTKSTT) is disordered. The segment covering 257–266 (SMQTTTKSTT) has biased composition (polar residues).

This sequence belongs to the baculoviridae LEF-1 family. Interacts with LEF-2.

Functionally, plays an essential role in viral DNA replication. May generates single-stranded DNA for both leading and lagging strand synthesis. The primase initiates primer synthesis and thereby produces large amount of short RNA primers on the lagging strand that the polymerase elongates using dNTPs. This chain is DNA primase (LEF-1), found in Autographa californica nuclear polyhedrosis virus (AcMNPV).